Consider the following 504-residue polypeptide: ATP synthase subunit alpha, chloroplastic (504 aa).

Residue 170-177 (GDRQTGKT) coordinates ATP.

Belongs to the ATPase alpha/beta chains family. As to quaternary structure, F-type ATPases have 2 components, CF(1) - the catalytic core - and CF(0) - the membrane proton channel. CF(1) has five subunits: alpha(3), beta(3), gamma(1), delta(1), epsilon(1). CF(0) has four main subunits: a, b, b' and c.

It localises to the plastid. The protein localises to the chloroplast thylakoid membrane. It carries out the reaction ATP + H2O + 4 H(+)(in) = ADP + phosphate + 5 H(+)(out). In terms of biological role, produces ATP from ADP in the presence of a proton gradient across the membrane. The alpha chain is a regulatory subunit. The chain is ATP synthase subunit alpha, chloroplastic from Jasminum nudiflorum (Winter jasmine).